The following is a 261-amino-acid chain: Insulin-like growth factor-binding protein-related protein 1 (261 aa).

A signal peptide spans 1–17 (MWIPLLLVALVVPAIRC). Positions 18–101 (ERKCGECNPE…DPPEAMCVCL (84 aa)) constitute an IGFBP N-terminal domain. 8 cysteine pairs are disulfide-bonded: Cys21–Cys45, Cys24–Cys47, Cys29–Cys48, Cys36–Cys51, Cys59–Cys82, Cys76–Cys98, Cys100–Cys118, and Cys107–Cys139. Residues 70–141 (NRGHGPCGEY…RAMHRGPCKS (72 aa)) enclose the Kazal-like domain. Residues 143–243 (PKITSPPEEA…GESSAAARVV (101 aa)) enclose the Ig-like C2-type domain. Asn154 carries an N-linked (GlcNAc...) asparagine glycan. Residues Cys164 and Cys227 are joined by a disulfide bond.

As to expression, expressed by the venom gland.

The protein localises to the secreted. This is Insulin-like growth factor-binding protein-related protein 1 from Cupiennius salei (American wandering spider).